Reading from the N-terminus, the 40-residue chain is Large ribosomal subunit protein bL36 (40 aa).

This sequence belongs to the bacterial ribosomal protein bL36 family.

This chain is Large ribosomal subunit protein bL36, found in Corynebacterium aurimucosum (strain ATCC 700975 / DSM 44827 / CIP 107346 / CN-1) (Corynebacterium nigricans).